A 123-amino-acid polypeptide reads, in one-letter code: UPF0102 protein PFL_5073 (123 aa).

Belongs to the UPF0102 family.

This Pseudomonas fluorescens (strain ATCC BAA-477 / NRRL B-23932 / Pf-5) protein is UPF0102 protein PFL_5073.